Here is a 443-residue protein sequence, read N- to C-terminus: Probable 26S proteasome regulatory subunit 4 (443 aa).

Positions 1–53 (MGQQQSGFGGRGNDRGAGDGEKKEKKKYEAPIPSRIGKKKKGSKGPDAASKLP) are disordered. Over residues 12 to 29 (GNDRGAGDGEKKEKKKYE) the composition is skewed to basic and acidic residues. 229-236 (GCPGTGKT) contacts ATP.

The protein belongs to the AAA ATPase family.

The protein localises to the cytoplasm. Its subcellular location is the nucleus. The 26S proteasome is involved in the ATP-dependent degradation of ubiquitinated proteins. The regulatory (or ATPase) complex confers ATP dependency and substrate specificity to the 26S complex. May play a role in the degradation of microtubule severing protein mei-1. This Caenorhabditis elegans protein is Probable 26S proteasome regulatory subunit 4 (rpt-2).